Reading from the N-terminus, the 109-residue chain is Spermidine export protein MdtI (109 aa).

Helical transmembrane passes span 6 to 26 (FYPI…NILL), 36 to 56 (WLGI…AQAV), 64 to 84 (AYAL…WILF), and 88 to 108 (LNYK…MIKL).

This sequence belongs to the drug/metabolite transporter (DMT) superfamily. Small multidrug resistance (SMR) (TC 2.A.7.1) family. MdtI subfamily. Forms a complex with MdtJ.

The protein resides in the cell inner membrane. Functionally, catalyzes the excretion of spermidine. The chain is Spermidine export protein MdtI from Yersinia pseudotuberculosis serotype O:1b (strain IP 31758).